Reading from the N-terminus, the 529-residue chain is N5-hydroxyornithine acetylase sidL (529 aa).

Disordered regions lie at residues 59–95 and 239–258; these read ASVNGEGHAQPAGDDHATAVDAGDGSAQKRKKRVRPF and SPWPGSSGSPNDSRPGSPVA. His-462 contacts substrate. Residue Glu-498 is the Proton acceptor of the active site.

Belongs to the lysine N-acyltransferase mbtK family.

It is found in the cytoplasm. The protein resides in the cytosol. Its pathway is siderophore biosynthesis. In terms of biological role, acyltransferase; part of the gene cluster that mediates the biosynthesis of at least 11 siderophores, including beauverichelin A, dimerumic acid (DA), Na-dimethyl coprogen (NADC), eleutherazine B, ferricrocin (FC), fusarinine A, fusarinine C (FsC), metachelin A, mevalonolactone, rhodotorulic acid (RA) and tenellin. This cocktail of siderophores for iron metabolism is essential for virulence, and more specifically for the fungal virulence in penetrating through the host cuticle. Siderophore synthesis is also involved in conidial germination under iron-deficient conditions. SIDL contributes to partial production of ferricrocin under iron-limiting conditions via the acetylation of N(5)-hydroxyornithine. The protein is N5-hydroxyornithine acetylase sidL of Beauveria bassiana (strain ARSEF 2860) (White muscardine disease fungus).